A 458-amino-acid chain; its full sequence is Brassinosteroid-related acyltransferase 1 (458 aa).

Histidine 164 serves as the catalytic Proton acceptor.

The protein belongs to the plant acyltransferase family. In terms of tissue distribution, highly expressed in young tissues and vascular bundles. Mostly expressed in young leaves, primary roots, flowers (including petals and sepals), and siliques.

It is found in the endoplasmic reticulum. The protein resides in the nucleus. Its pathway is plant hormone biosynthesis; brassinosteroid biosynthesis. Functionally, brassinosteroids (BR) acyltransferase with acyl-CoA ligase activity toward brassinolide (BL), castasterone (CS), typhasterol (TY), 6-deoxotyphasterol (6-deoxoTY), and 6-deoxocastasterone (6-deoxoCS) and thus converts them to corresponding lauroyl esters. Regulates BR homeostasis and promotes BR-mediated cell growth regulation. Involved in vascular bundle development. This chain is Brassinosteroid-related acyltransferase 1, found in Arabidopsis thaliana (Mouse-ear cress).